The sequence spans 249 residues: Secretion system apparatus lipoprotein SsaJ (249 aa).

Positions 1–18 are cleaved as a signal peptide; sequence MKVHRIVFLTVLTFFLTA. A lipid anchor (N-palmitoyl cysteine) is attached at Cys19. A lipid anchor (S-diacylglycerol cysteine) is attached at Cys19. Residues 225 to 245 traverse the membrane as a helical segment; sequence LMLSLTGLLLGVGILIGYFCL.

This sequence belongs to the YscJ lipoprotein family.

The protein localises to the cell outer membrane. In terms of biological role, component of Salmonella pathogenicity island 2 (SPI-2) type III secretion system, required for secretion of some type III-secreted effectors including the SpvB exotoxin. The sequence is that of Secretion system apparatus lipoprotein SsaJ (ssaJ) from Salmonella typhimurium (strain 14028s / SGSC 2262).